Consider the following 101-residue polypeptide: Phosphoribosyl-AMP cyclohydrolase (101 aa).

Position 71 (Asp-71) interacts with Mg(2+). Cys-72 is a Zn(2+) binding site. Mg(2+)-binding residues include Asp-73 and Asp-75. Zn(2+) is bound by residues Cys-88 and Cys-95.

The protein belongs to the PRA-CH family. Homodimer. Mg(2+) serves as cofactor. The cofactor is Zn(2+).

Its subcellular location is the cytoplasm. The catalysed reaction is 1-(5-phospho-beta-D-ribosyl)-5'-AMP + H2O = 1-(5-phospho-beta-D-ribosyl)-5-[(5-phospho-beta-D-ribosylamino)methylideneamino]imidazole-4-carboxamide. The protein operates within amino-acid biosynthesis; L-histidine biosynthesis; L-histidine from 5-phospho-alpha-D-ribose 1-diphosphate: step 3/9. Its function is as follows. Catalyzes the hydrolysis of the adenine ring of phosphoribosyl-AMP. This chain is Phosphoribosyl-AMP cyclohydrolase, found in Bacillus cytotoxicus (strain DSM 22905 / CIP 110041 / 391-98 / NVH 391-98).